Reading from the N-terminus, the 363-residue chain is Probable dual-specificity RNA methyltransferase RlmN (363 aa).

E106 serves as the catalytic Proton acceptor. In terms of domain architecture, Radical SAM core spans 112–345 (HEYGNSVCVT…VTIRREQGHD (234 aa)). Residues C119 and C350 are joined by a disulfide bond. [4Fe-4S] cluster contacts are provided by C126, C130, and C133. Residues 176-177 (GE), S208, 231-233 (SLH), and N307 each bind S-adenosyl-L-methionine. C350 functions as the S-methylcysteine intermediate in the catalytic mechanism.

The protein belongs to the radical SAM superfamily. RlmN family. It depends on [4Fe-4S] cluster as a cofactor.

The protein localises to the cytoplasm. The catalysed reaction is adenosine(2503) in 23S rRNA + 2 reduced [2Fe-2S]-[ferredoxin] + 2 S-adenosyl-L-methionine = 2-methyladenosine(2503) in 23S rRNA + 5'-deoxyadenosine + L-methionine + 2 oxidized [2Fe-2S]-[ferredoxin] + S-adenosyl-L-homocysteine. The enzyme catalyses adenosine(37) in tRNA + 2 reduced [2Fe-2S]-[ferredoxin] + 2 S-adenosyl-L-methionine = 2-methyladenosine(37) in tRNA + 5'-deoxyadenosine + L-methionine + 2 oxidized [2Fe-2S]-[ferredoxin] + S-adenosyl-L-homocysteine. Its function is as follows. Specifically methylates position 2 of adenine 2503 in 23S rRNA and position 2 of adenine 37 in tRNAs. In Bacillus subtilis (strain 168), this protein is Probable dual-specificity RNA methyltransferase RlmN.